Consider the following 510-residue polypeptide: Arginine biosynthesis bifunctional protein ArgJ, mitochondrial (510 aa).

The span at 57 to 70 (TSTNEPSAATTNVP) shows a compositional bias: polar residues. Residues 57-76 (TSTNEPSAATTNVPHPQEAP) form a disordered region. Thr222, Lys248, Thr267, and Glu364 together coordinate substrate. Residue Thr267 is the Nucleophile of the active site.

The protein belongs to the ArgJ family. In terms of assembly, heterodimer of an alpha and a beta chain. The alpha and beta chains are autoproteolytically processed from a single precursor protein within the mitochondrion.

The protein resides in the mitochondrion matrix. The enzyme catalyses N(2)-acetyl-L-ornithine + L-glutamate = N-acetyl-L-glutamate + L-ornithine. It carries out the reaction L-glutamate + acetyl-CoA = N-acetyl-L-glutamate + CoA + H(+). Its pathway is amino-acid biosynthesis; L-arginine biosynthesis; L-ornithine and N-acetyl-L-glutamate from L-glutamate and N(2)-acetyl-L-ornithine (cyclic): step 1/1. It functions in the pathway amino-acid biosynthesis; L-arginine biosynthesis; N(2)-acetyl-L-ornithine from L-glutamate: step 1/4. Catalyzes two activities which are involved in the cyclic version of arginine biosynthesis: the synthesis of acetylglutamate from glutamate and acetyl-CoA, and of ornithine by transacetylation between acetylornithine and glutamate. This Malassezia globosa (strain ATCC MYA-4612 / CBS 7966) (Dandruff-associated fungus) protein is Arginine biosynthesis bifunctional protein ArgJ, mitochondrial.